Here is a 423-residue protein sequence, read N- to C-terminus: UDP-N-acetylglucosamine 1-carboxyvinyltransferase 2 (423 aa).

23–24 provides a ligand contact to phosphoenolpyruvate; sequence KN. Arg95 contacts UDP-N-acetyl-alpha-D-glucosamine. Cys119 serves as the catalytic Proton donor. Cys119 carries the 2-(S-cysteinyl)pyruvic acid O-phosphothioketal modification. Residues Asp306 and Ile328 each coordinate UDP-N-acetyl-alpha-D-glucosamine.

It belongs to the EPSP synthase family. MurA subfamily.

It is found in the cytoplasm. It carries out the reaction phosphoenolpyruvate + UDP-N-acetyl-alpha-D-glucosamine = UDP-N-acetyl-3-O-(1-carboxyvinyl)-alpha-D-glucosamine + phosphate. It functions in the pathway cell wall biogenesis; peptidoglycan biosynthesis. Its function is as follows. Cell wall formation. Adds enolpyruvyl to UDP-N-acetylglucosamine. The chain is UDP-N-acetylglucosamine 1-carboxyvinyltransferase 2 from Symbiobacterium thermophilum (strain DSM 24528 / JCM 14929 / IAM 14863 / T).